A 388-amino-acid polypeptide reads, in one-letter code: MRYLTAGESHGPRLTAIIEGIPAGLPLTAEDINEDLRRRQGGYGRGGRMKIESDQVVFTSGVRHGKTTGAPITMDVINKDHQKWLDIMSAEDIEDRLKSKRKITHPRPGHADLVGGIKYRFDDLRNSLERSSARETTMRVAVGAVAKRLLAELDMEIANHVVVFGGKEIDVPENLTVAEIKQRAAQSEVSIVNQEREQEIKDYIDQIKRDGDTIGGVVETVVGGVPVGXGSYVQWDRKLDARLAQAVVSINAFKGVEFGLGFEAGYRKGSQVMDEILWSKEDGYTRRTNNLGGFEGGMTNGQPIVVRGVMKPIPTLYKPLMSVDIETHEPYKATVERSDPTALPAAGMVMEAVVATVLAQEILEKFSSDNLEELKEAVAKHRDYTKNY.

NADP(+) is bound by residues Arg39 and Arg45. Residues 130 to 132 (RSS), 251 to 252 (NA), Gly296, 311 to 315 (KPIPT), and Arg337 each bind FMN.

It belongs to the chorismate synthase family. In terms of assembly, homotetramer. The cofactor is FMNH2.

The enzyme catalyses 5-O-(1-carboxyvinyl)-3-phosphoshikimate = chorismate + phosphate. It functions in the pathway metabolic intermediate biosynthesis; chorismate biosynthesis; chorismate from D-erythrose 4-phosphate and phosphoenolpyruvate: step 7/7. In terms of biological role, catalyzes the anti-1,4-elimination of the C-3 phosphate and the C-6 proR hydrogen from 5-enolpyruvylshikimate-3-phosphate (EPSP) to yield chorismate, which is the branch point compound that serves as the starting substrate for the three terminal pathways of aromatic amino acid biosynthesis. This reaction introduces a second double bond into the aromatic ring system. This is Chorismate synthase from Streptococcus pneumoniae serotype 19F (strain G54).